The following is a 122-amino-acid chain: Large ribosomal subunit protein bL12 (122 aa).

This sequence belongs to the bacterial ribosomal protein bL12 family. Homodimer. Part of the ribosomal stalk of the 50S ribosomal subunit. Forms a multimeric L10(L12)X complex, where L10 forms an elongated spine to which 2 to 4 L12 dimers bind in a sequential fashion. Binds GTP-bound translation factors.

Functionally, forms part of the ribosomal stalk which helps the ribosome interact with GTP-bound translation factors. Is thus essential for accurate translation. The chain is Large ribosomal subunit protein bL12 from Azotobacter vinelandii (strain DJ / ATCC BAA-1303).